We begin with the raw amino-acid sequence, 552 residues long: Terpene synthase 5 (552 aa).

Residues Asp-307, Asp-311, and Glu-457 each contribute to the Mg(2+) site. Residues 307-311 carry the DDXXD motif motif; that stretch reads DDTYD.

The protein belongs to the terpene synthase family. It depends on Mg(2+) as a cofactor.

Its function is as follows. Catalyzes the cyclization of farnesyl diphosphate to multiple sesquiterpenes, such as olefins and sesquiterpene alcohols. The sequence is that of Terpene synthase 5 (TPS5) from Ricinus communis (Castor bean).